The following is a 1309-amino-acid chain: Target of rapamycin complex 2 subunit ste20 (1309 aa).

Residues 24–110 form the REM-1 domain; that stretch reads DFIKKMNTTD…IESFQGENGE (87 aa). A disordered region spans residues 105–128; sequence QGENGEAKTGSTSLTRSASATVSR. The segment covering 113 to 128 has biased composition (polar residues); it reads TGSTSLTRSASATVSR. Residue Ser-151 is modified to Phosphoserine. The interval 183 to 205 is disordered; the sequence is NVNEKNNSSSEDTQPNGKRPSSL. Residues 194–205 show a composition bias toward polar residues; sequence DTQPNGKRPSSL. The next 6 membrane-spanning stretches (helical) occupy residues 285–305, 392–412, 504–524, 564–584, 926–946, and 984–1004; these read LFLDATAFSCCQMLNLPWILS, LIDGSISENLAASAALALVYL, VIDLFFLIFQVEYSSWSESFL, TAVLLFIFLELGLVESIVCMI, LNHWAISLLIFQLYDPCLEVC, and LLLRFLATTVGFHYLSEINFI. A Phosphothreonine modification is found at Thr-1203.

It belongs to the RICTOR family. As to quaternary structure, the target of rapamycin complex 2 (TORC2) is composed of at least bit61, pop3/wat1, sin1, ste20 and tor1. Either Ser-203 or Ser-204 are phosphorylated as well.

The protein resides in the membrane. In terms of biological role, component of TORC2, which regulates multiple cellular processes to control cell growth in response to environmental signals. TORC2 is required for cell survival under various stress conditions. TORC2 positively controls G1 cell-cycle arrest, sexual development and amino acid uptake. Positively regulates amino acid uptake through the control of expression of amino acid permeases. The protein is Target of rapamycin complex 2 subunit ste20 of Schizosaccharomyces pombe (strain 972 / ATCC 24843) (Fission yeast).